Consider the following 497-residue polypeptide: MGTEKKEGLPKEETSEDSKPHGQTVEKLAQEVCHGHEFGEASEEDMSEGHLRESSKEIIEKRYPQERHFASGLLIFKKSSSGEKTSENPRGFNPNPSVLCHGGAERASACAASGHNCLGSIELTKAQGPPVGEKPHTCKECGKAFNQNSHLIQHMRVHSGEKPFECKECGKTFGTNSSLRRHQRIHAGEKPFACTECGKAFIQSSHLIHHHRIHTGERPYKCEECGKAFSQNSALILHQRIHTGEKPYECNECGKTFRVSSQLIQHQRIHTEERYHECSECGKAFKHSSGLIRHQKIHTGEKPYLCNECGKGFGQSSELIRHQRIHTGDKPYECSECGKTFGQNSEIIRHIRIHTGEKPYVCKECGKAFRGNSELLRHERIHTGEKPYECFECGKAFRRTSHLIVHQRIHTGEKPHQCNECARTFWDNSELLLHQKIHIGEKPYECSECEKTFSQHSQLTIHQRIHTGEKPYECQECQKTFSRSSHLLRHQSVHCSE.

Positions 1–20 (MGTEKKEGLPKEETSEDSKP) are enriched in basic and acidic residues. Residues 1 to 53 (MGTEKKEGLPKEETSEDSKPHGQTVEKLAQEVCHGHEFGEASEEDMSEGHLRE) form a disordered region. Glycyl lysine isopeptide (Lys-Gly) (interchain with G-Cter in SUMO2) cross-links involve residues K6 and K11. 13 consecutive C2H2-type zinc fingers follow at residues 136 to 158 (HTCK…MRVH), 164 to 186 (FECK…QRIH), 192 to 214 (FACT…HRIH), 220 to 242 (YKCE…QRIH), 248 to 270 (YECN…QRIH), 276 to 298 (HECS…QKIH), 304 to 326 (YLCN…QRIH), 332 to 354 (YECS…IRIH), 360 to 382 (YVCK…ERIH), 388 to 410 (YECF…QRIH), 416 to 438 (HQCN…QKIH), 444 to 466 (YECS…QRIH), and 472 to 494 (YECQ…QSVH).

This sequence belongs to the krueppel C2H2-type zinc-finger protein family.

Its subcellular location is the nucleus. Functionally, may be involved in transcriptional regulation. In Mus musculus (Mouse), this protein is Zinc finger protein 3 (Zfp3).